A 1798-amino-acid chain; its full sequence is Laminin subunit beta-2 (1798 aa).

A signal peptide spans 1–32 (MELTSRERGRGQPLPWELRLGLLLSVLAATLA). Residues 43–282 (SRGSCYPATG…ALYELVVRGN (240 aa)) form the Laminin N-terminal domain. Asn-248 carries N-linked (GlcNAc...) asparagine glycosylation. Intrachain disulfides connect Cys-283/Cys-292, Cys-285/Cys-310, Cys-312/Cys-321, Cys-324/Cys-344, Cys-347/Cys-356, Cys-349/Cys-374, Cys-377/Cys-386, Cys-389/Cys-407, Cys-410/Cys-423, Cys-412/Cys-438, Cys-440/Cys-449, Cys-452/Cys-467, Cys-470/Cys-484, Cys-472/Cys-491, Cys-493/Cys-502, Cys-505/Cys-519, Cys-522/Cys-534, Cys-524/Cys-541, and Cys-543/Cys-552. Laminin EGF-like domains follow at residues 283–346 (CFCY…ACRK), 347–409 (CECH…VCRS), 410–469 (CDCD…GCRR), and 470–521 (CQCN…GCRP). Asn-368 carries an N-linked (GlcNAc...) asparagine glycan. The Laminin EGF-like 5; truncated domain occupies 522 to 552 (CDCDVGGALDPQCDEGTGQCHCRQHMVGRRC). The Laminin IV type B domain occupies 561-777 (RPFLDHLIWE…LLISLSTLIY (217 aa)). Disulfide bonds link Cys-783-Cys-795, Cys-785-Cys-802, Cys-804-Cys-813, Cys-816-Cys-828, Cys-831-Cys-843, Cys-833-Cys-850, Cys-852-Cys-861, Cys-864-Cys-874, Cys-877-Cys-886, Cys-879-Cys-893, Cys-896-Cys-905, Cys-908-Cys-924, Cys-927-Cys-943, Cys-929-Cys-954, Cys-956-Cys-965, Cys-968-Cys-983, Cys-986-Cys-1000, Cys-988-Cys-1007, Cys-1010-Cys-1019, Cys-1022-Cys-1035, Cys-1038-Cys-1058, Cys-1040-Cys-1065, Cys-1067-Cys-1076, Cys-1079-Cys-1092, Cys-1095-Cys-1107, Cys-1097-Cys-1114, Cys-1116-Cys-1125, Cys-1128-Cys-1140, Cys-1143-Cys-1155, Cys-1145-Cys-1162, Cys-1164-Cys-1173, and Cys-1176-Cys-1187. Laminin EGF-like domains lie at 783–830 (CQCN…GCQA), 831–876 (CQCS…SCRP), 877–926 (CVCN…QCRP), 927–985 (CPCP…RCQL), 986–1037 (CECS…SCHR), 1038–1094 (CTCN…GCQP), 1095–1142 (CACH…QCHA), and 1143–1189 (CDCD…ACHP). Residue Asn-1085 is glycosylated (N-linked (GlcNAc...) asparagine). Positions 1190–1409 (CHACFGDWDR…LSLTDINELV (220 aa)) are domain II. Asn-1249, Asn-1308, and Asn-1348 each carry an N-linked (GlcNAc...) asparagine glycan. Residues 1253 to 1319 (ASTAQLVEAT…TLRQLDQHLD (67 aa)) are a coiled coil. A disordered region spans residues 1338 to 1364 (SQSAEAERRANTSALAVPSPVSNSASA). Over residues 1350 to 1363 (SALAVPSPVSNSAS) the composition is skewed to low complexity. Positions 1410–1442 (CGAPGDAPCATSPCGGAGCRDEDGQPRCGGLSC) are domain alpha. Residues 1443-1798 (NGAAATADLA…LQVQIYNTCQ (356 aa)) form a domain I region. Positions 1472 to 1526 (SILSRVAETRRQASEAQQRAQAALDKANASRGQVEQANQELQELIQSVKDFLNQE) form a coiled coil. A glycan (N-linked (GlcNAc...) asparagine) is linked at Asn-1499. At Ser-1532 the chain carries Phosphoserine; by FAM20C. Residues 1577–1790 (VGDVRRAEQL…RSVLQAINLQ (214 aa)) are a coiled coil.

Laminin is a complex glycoprotein, consisting of three different polypeptide chains (alpha, beta, gamma), which are bound to each other by disulfide bonds into a cross-shaped molecule comprising one long and three short arms with globules at each end. Beta-2 is a subunit of laminin-3 (laminin-121 or S-laminin), laminin-4 (laminin-221 or S-merosin), laminin-7 (laminin-321 or KS-laminin), laminin-9 (laminin-421), laminin-11 (laminin-521), laminin-14 (laminin-423) and laminin-15 (laminin-523).

The protein localises to the secreted. The protein resides in the extracellular space. It is found in the extracellular matrix. It localises to the basement membrane. Its function is as follows. Binding to cells via a high affinity receptor, laminin is thought to mediate the attachment, migration and organization of cells into tissues during embryonic development by interacting with other extracellular matrix components. This Homo sapiens (Human) protein is Laminin subunit beta-2 (LAMB2).